Reading from the N-terminus, the 863-residue chain is DNA gyrase subunit A (863 aa).

One can recognise a Topo IIA-type catalytic domain in the interval 37–500 (LPDARDGLKP…DYDDIDIEDL (464 aa)). Residue Tyr125 is the O-(5'-phospho-DNA)-tyrosine intermediate of the active site. The GyrA-box signature appears at 527–533 (QKRGGKG).

The protein belongs to the type II topoisomerase GyrA/ParC subunit family. As to quaternary structure, heterotetramer, composed of two GyrA and two GyrB chains. In the heterotetramer, GyrA contains the active site tyrosine that forms a transient covalent intermediate with DNA, while GyrB binds cofactors and catalyzes ATP hydrolysis.

The protein localises to the cytoplasm. The catalysed reaction is ATP-dependent breakage, passage and rejoining of double-stranded DNA.. In terms of biological role, a type II topoisomerase that negatively supercoils closed circular double-stranded (ds) DNA in an ATP-dependent manner to modulate DNA topology and maintain chromosomes in an underwound state. Negative supercoiling favors strand separation, and DNA replication, transcription, recombination and repair, all of which involve strand separation. Also able to catalyze the interconversion of other topological isomers of dsDNA rings, including catenanes and knotted rings. Type II topoisomerases break and join 2 DNA strands simultaneously in an ATP-dependent manner. The chain is DNA gyrase subunit A from Campylobacter jejuni subsp. jejuni serotype O:2 (strain ATCC 700819 / NCTC 11168).